Consider the following 1040-residue polypeptide: Tudor domain-containing protein 5 (1040 aa).

HTH OST-type domains lie at 7–80 (IQDC…KAIP), 122–197 (VPPI…LKKS), and 291–365 (VDPE…FDAD). The Tudor domain occupies 533–592 (FIQPGHLCCVKISEDKWWYRVIIHRILGKKEVEVFYPDFGNIGTVQKSSLRFLKCCYTKL). S809 carries the post-translational modification Phosphoserine. Disordered regions lie at residues 857 to 891 (DVKG…YPLD) and 912 to 975 (AERS…AKDK). Polar residues-rich tracts occupy residues 872–891 (EKNT…YPLD) and 912–924 (AERS…SIQT). S943 carries the phosphoserine modification. Residues 946–956 (NHSGSVESSPG) show a composition bias toward polar residues. Over residues 958-975 (LKKEDVSNSRAEATAKDK) the composition is skewed to basic and acidic residues.

Belongs to the TDRD5 family. As to expression, gonad-specific. Mainly expressed in testis. Present at low level in ovary (at protein level).

It localises to the cytoplasm. Required during spermiogenesis to participate in the repression transposable elements and prevent their mobilization, which is essential for the germline integrity. Probably acts via the piRNA metabolic process, which mediates the repression of transposable elements during meiosis by forming complexes composed of piRNAs and Piwi proteins and govern the methylation and subsequent repression of transposons. Required for chromatoid body (CB) assembly. The chain is Tudor domain-containing protein 5 (Tdrd5) from Mus musculus (Mouse).